The chain runs to 107 residues: MDIETKKVIEQILDNNKIVLFMKGSKLMPMCGFSNTAIQILNTLNTDYFTYDILENENIRQAIKEHSSWPTIPQLYINREFVGGADIMLELFEQGELQAQVETLLAA.

The Glutaredoxin domain occupies 6–107; it reads KKVIEQILDN…QAQVETLLAA (102 aa). Lys23 provides a ligand contact to glutathione. A [2Fe-2S] cluster-binding site is contributed by Cys31. Glutathione is bound by residues Arg60 and 85 to 86; that span reads AD.

It belongs to the glutaredoxin family. Monothiol subfamily.

The protein localises to the plastid. It localises to the chloroplast. This is an uncharacterized protein from Porphyra purpurea (Red seaweed).